The primary structure comprises 743 residues: MAEVDFGDTELFEQLDGDLPASSVHVRFDSEGEANDVQELVSQHEETINRLSAENQELKRRLSLLNRPSGLPVEDKLDGPLLQILFMNHIISKQYHQEIEEFITSLFQKYEEHRKSNSEKTSFNIKPQPSSILLEENDDSDADTMKNIKQAFSVVGSVQYFKNFCLDKLGQPLLNENPQLTEGWDIPKYQQVFTQIVSLDGQEIQVKAKRPKPCCFNCGSEEHQMRDCPKPRDQAHINMKRKEFLDACGEAGNQNQQRYHAEEVEERFGKYKPGVISEELQEALGIMDKNLPPFIYRMRELGYPPGWLKEAELENSGLSLYDGKERLDASDGEIEDRDTEAKKHVSYDVSKLVNYPGFNISAPPDMFDEWQMFGSIPMQQAHQKDIFANYLTDSFPPGSSNKSNKRSSCQSSSSERKRQKTSGNHTVTSAVMDMDMESDEDMYHSRASKGYMFHPPLPPGSPSYGTPPPLPRGTPPSTPPNFIPPPPPTPTPPPLPKGTPPPTPNRDSPKVPPQVLDEDTWTLEELEEKQRLLWAQLDNGESTNSDCDAHTPITVSSVTSSPSRTELDIATGRKAAPRQTAHELKSPCVITKLFVAEPEEGGPLIPEEGGPLIPEEGGPLIPEEGGPLIPEEGGPLIPEEDSETNEDSNECYVVEGNDIEVNKLSSKHENASEKNPSDEDATEEAACVEPSPKRSGVPDVSKFAEGITPFEYDNMSDSTGVYLRLRGLLKNSPRNVQKSKKQV.

Positions 29 to 67 form a coiled coil; that stretch reads DSEGEANDVQELVSQHEETINRLSAENQELKRRLSLLNR. A CCHC-type zinc finger spans residues 213–230; that stretch reads PCCFNCGSEEHQMRDCPK. 5 disordered regions span residues 390-432, 449-518, 540-566, 600-649, and 662-700; these read YLTD…SAVM, KGYM…VLDE, GEST…SRTE, EGGP…EDSN, and NKLS…VPDV. Positions 399 to 413 are enriched in low complexity; the sequence is SSNKSNKRSSCQSSS. Residues 455–504 are compositionally biased toward pro residues; that stretch reads PPLPPGSPSYGTPPPLPRGTPPSTPPNFIPPPPPTPTPPPLPKGTPPPTP. Composition is skewed to low complexity over residues 551 to 564 and 601 to 637; these read TPIT…SPSR and GGPL…GPLI. Over residues 638 to 649 the composition is skewed to acidic residues; it reads PEEDSETNEDSN. Positions 666-677 are enriched in basic and acidic residues; it reads SKHENASEKNPS.

The protein belongs to the ZCCHC8 family.

The protein resides in the nucleus. It is found in the nucleoplasm. Its function is as follows. Scaffolding subunit of the trimeric nuclear exosome targeting (NEXT) complex that is involved in the surveillance and turnover of aberrant transcripts and non-coding RNAs. NEXT functions as an RNA exosome cofactor that directs a subset of non-coding short-lived RNAs for exosomal degradation. May be involved in pre-mRNA splicing. It is required for 3'-end maturation of telomerase RNA component (TERC), TERC 3'-end targeting to the nuclear RNA exosome, and for telomerase function. The protein is Zinc finger CCHC domain-containing protein 8 (zcchc8) of Xenopus laevis (African clawed frog).